The chain runs to 491 residues: Putative mannan endo-1,4-beta-mannosidase 5 (491 aa).

An N-terminal signal peptide occupies residues 1-31; that stretch reads METSYREEEARRKASLLHCIFFFLLGALAMA. Residues Trp134 and Asn248 each coordinate substrate. Catalysis depends on Glu249, which acts as the Proton donor. Tyr330 provides a ligand contact to substrate. Glu372 (nucleophile) is an active-site residue. An N-linked (GlcNAc...) asparagine glycan is attached at Asn385. Trp416 is a binding site for substrate. The N-linked (GlcNAc...) asparagine glycan is linked to Asn471.

It belongs to the glycosyl hydrolase 5 (cellulase A) family. In terms of tissue distribution, expression not detected.

It is found in the secreted. It carries out the reaction Random hydrolysis of (1-&gt;4)-beta-D-mannosidic linkages in mannans, galactomannans and glucomannans.. This chain is Putative mannan endo-1,4-beta-mannosidase 5 (MAN5), found in Oryza sativa subsp. japonica (Rice).